The chain runs to 328 residues: Glycerol-3-phosphate dehydrogenase [NAD(P)+] (328 aa).

The NADPH site is built by tryptophan 15, arginine 35, and lysine 108. Positions 108, 136, and 138 each coordinate sn-glycerol 3-phosphate. Alanine 140 serves as a coordination point for NADPH. The sn-glycerol 3-phosphate site is built by lysine 191, aspartate 244, serine 254, arginine 255, and asparagine 256. The active-site Proton acceptor is lysine 191. Residue arginine 255 participates in NADPH binding. The NADPH site is built by leucine 275 and glutamate 277.

The protein belongs to the NAD-dependent glycerol-3-phosphate dehydrogenase family.

The protein localises to the cytoplasm. The catalysed reaction is sn-glycerol 3-phosphate + NAD(+) = dihydroxyacetone phosphate + NADH + H(+). It catalyses the reaction sn-glycerol 3-phosphate + NADP(+) = dihydroxyacetone phosphate + NADPH + H(+). It participates in membrane lipid metabolism; glycerophospholipid metabolism. In terms of biological role, catalyzes the reduction of the glycolytic intermediate dihydroxyacetone phosphate (DHAP) to sn-glycerol 3-phosphate (G3P), the key precursor for phospholipid synthesis. This chain is Glycerol-3-phosphate dehydrogenase [NAD(P)+], found in Azorhizobium caulinodans (strain ATCC 43989 / DSM 5975 / JCM 20966 / LMG 6465 / NBRC 14845 / NCIMB 13405 / ORS 571).